Consider the following 272-residue polypeptide: ATP synthase subunit a (272 aa).

The next 5 membrane-spanning stretches (helical) occupy residues 41–61, 101–121, 147–167, 221–241, and 243–263; these read VLNI…LVLF, VIAP…FMDL, DVNI…FYSI, LIFI…LSVP, and AIFH…LTIV.

It belongs to the ATPase A chain family. In terms of assembly, F-type ATPases have 2 components, CF(1) - the catalytic core - and CF(0) - the membrane proton channel. CF(1) has five subunits: alpha(3), beta(3), gamma(1), delta(1), epsilon(1). CF(0) has three main subunits: a(1), b(2) and c(9-12). The alpha and beta chains form an alternating ring which encloses part of the gamma chain. CF(1) is attached to CF(0) by a central stalk formed by the gamma and epsilon chains, while a peripheral stalk is formed by the delta and b chains.

It is found in the cell inner membrane. In terms of biological role, key component of the proton channel; it plays a direct role in the translocation of protons across the membrane. The sequence is that of ATP synthase subunit a from Erwinia tasmaniensis (strain DSM 17950 / CFBP 7177 / CIP 109463 / NCPPB 4357 / Et1/99).